The chain runs to 76 residues: Frizzled-3 (76 aa).

Residues Tyr-1–Pro-5 lie on the Cytoplasmic side of the membrane. A helical membrane pass occupies residues Ile-6 to Leu-26. The Extracellular portion of the chain corresponds to Glu-27–Cys-54. Asn-33 is a glycosylation site (N-linked (GlcNAc...) asparagine). A helical transmembrane segment spans residues Thr-55–Leu-75. Position 76 (Arg-76) is a topological domain, cytoplasmic.

Belongs to the G-protein coupled receptor Fz/Smo family.

Its subcellular location is the membrane. The protein resides in the cell membrane. The protein localises to the cell surface. It is found in the apical cell membrane. Receptor for Wnt proteins. Most of frizzled receptors are coupled to the beta-catenin canonical signaling pathway, which leads to the activation of disheveled proteins, inhibition of GSK-3 kinase, nuclear accumulation of beta-catenin and activation of Wnt target genes. A second signaling pathway involving PKC and calcium fluxes has been seen for some family members, but it is not yet clear if it represents a distinct pathway or if it can be integrated in the canonical pathway, as PKC seems to be required for Wnt-mediated inactivation of GSK-3 kinase. Both pathways seem to involve interactions with G-proteins. May be involved in transduction and intercellular transmission of polarity information during tissue morphogenesis and/or in differentiated tissues. Plays a role in controlling early axon growth and guidance processes necessary for the formation of a subset of central and peripheral major fiber tracts. Involved in the migration of cranial neural crest cells. May also be implicated in the transmission of sensory information from the trunk and limbs to the brain. Controls commissural sensory axons guidance after midline crossing along the anterior-posterior axis in the developing spinal cord in a Wnt-dependent signaling pathway. Together with FZD6, is involved in the neural tube closure and plays a role in the regulation of the establishment of planar cell polarity (PCP). Promotes neurogenesis by maintaining sympathetic neuroblasts within the cell cycle in a beta-catenin-dependent manner. The polypeptide is Frizzled-3 (FZD3) (Gallus gallus (Chicken)).